The primary structure comprises 446 residues: Probable D-serine dehydratase (446 aa).

K116 is subject to N6-(pyridoxal phosphate)lysine.

This sequence belongs to the serine/threonine dehydratase family. DsdA subfamily. The cofactor is pyridoxal 5'-phosphate.

The enzyme catalyses D-serine = pyruvate + NH4(+). The protein is Probable D-serine dehydratase of Bacillus thuringiensis (strain Al Hakam).